A 214-amino-acid polypeptide reads, in one-letter code: Ras-related protein RABA5c (214 aa).

19-26 (GDSAVGKS) contributes to the GTP binding site. Positions 41 to 49 (SKATIGVEF) match the Effector region motif. GTP contacts are provided by residues 67-71 (DTAGQ), 125-128 (NKCD), and 155-156 (SA). Residues cysteine 211 and cysteine 212 are each lipidated (S-geranylgeranyl cysteine).

Belongs to the small GTPase superfamily. Rab family. As to quaternary structure, interacts (via C-terminus) with GDI1. Interacts with PUX8/SAY1. As to expression, expressed in roots and actively dividing cells.

The protein resides in the golgi apparatus membrane. The protein localises to the golgi apparatus. It localises to the trans-Golgi network membrane. It is found in the cell membrane. Functionally, intracellular vesicle trafficking and protein transport. Binds GTP and GDP and possesses intrinsic GTPase activity. This Arabidopsis thaliana (Mouse-ear cress) protein is Ras-related protein RABA5c (RABA5C).